A 337-amino-acid polypeptide reads, in one-letter code: DNA-directed RNA polymerase subunit alpha (337 aa).

The tract at residues 1 to 226 (MLIAQRPTLT…ELFGLARELN (226 aa)) is alpha N-terminal domain (alpha-NTD). The segment at 243 to 337 (LAADLALEIE…DTSFAEDEQL (95 aa)) is alpha C-terminal domain (alpha-CTD). Positions 315–337 (FDPSAVVNDFEDDDTSFAEDEQL) are disordered. A compositionally biased stretch (acidic residues) spans 323–337 (DFEDDDTSFAEDEQL).

The protein belongs to the RNA polymerase alpha chain family. In terms of assembly, homodimer. The RNAP catalytic core consists of 2 alpha, 1 beta, 1 beta' and 1 omega subunit. When a sigma factor is associated with the core the holoenzyme is formed, which can initiate transcription.

It carries out the reaction RNA(n) + a ribonucleoside 5'-triphosphate = RNA(n+1) + diphosphate. In terms of biological role, DNA-dependent RNA polymerase catalyzes the transcription of DNA into RNA using the four ribonucleoside triphosphates as substrates. This Kineococcus radiotolerans (strain ATCC BAA-149 / DSM 14245 / SRS30216) protein is DNA-directed RNA polymerase subunit alpha.